The primary structure comprises 98 residues: NADH-ubiquinone oxidoreductase chain 4L (98 aa).

The next 3 helical transmembrane spans lie at methionine 1–methionine 21, serine 29–leucine 49, and isoleucine 61–valine 81.

It belongs to the complex I subunit 4L family. As to quaternary structure, core subunit of respiratory chain NADH dehydrogenase (Complex I) which is composed of 45 different subunits.

It localises to the mitochondrion inner membrane. It catalyses the reaction a ubiquinone + NADH + 5 H(+)(in) = a ubiquinol + NAD(+) + 4 H(+)(out). In terms of biological role, core subunit of the mitochondrial membrane respiratory chain NADH dehydrogenase (Complex I) which catalyzes electron transfer from NADH through the respiratory chain, using ubiquinone as an electron acceptor. Part of the enzyme membrane arm which is embedded in the lipid bilayer and involved in proton translocation. In Mogera wogura (Japanese mole), this protein is NADH-ubiquinone oxidoreductase chain 4L (MT-ND4L).